Consider the following 397-residue polypeptide: UPF0597 protein Tmel_1007 (397 aa).

It belongs to the UPF0597 family.

The chain is UPF0597 protein Tmel_1007 from Thermosipho melanesiensis (strain DSM 12029 / CIP 104789 / BI429).